Here is an 84-residue protein sequence, read N- to C-terminus: Putative regulatory protein Hore_09800 (84 aa).

It belongs to the RemA family.

In Halothermothrix orenii (strain H 168 / OCM 544 / DSM 9562), this protein is Putative regulatory protein Hore_09800.